Here is a 232-residue protein sequence, read N- to C-terminus: Golgi SNAP receptor complex member 1 (232 aa).

Residues M1 to D211 are Cytoplasmic-facing. Coiled-coil stretches lie at residues Y6–K23 and G52–L80. The chain crosses the membrane as a helical; Anchor for type IV membrane protein span at residues S212–N232.

Belongs to the GOSR1 family. Component of several multiprotein Golgi SNARE complexes.

The protein localises to the golgi apparatus membrane. Functionally, involved in transport from the ER to the Golgi apparatus as well as in intra-Golgi transport. It belongs to a super-family of proteins called t-SNAREs or soluble NSF (N-ethylmaleimide-sensitive factor) attachment protein receptor. This is Golgi SNAP receptor complex member 1 (Gos28) from Drosophila melanogaster (Fruit fly).